The following is an 86-amino-acid chain: Large ribosomal subunit protein bL31B (86 aa).

It belongs to the bacterial ribosomal protein bL31 family. Type B subfamily. Part of the 50S ribosomal subunit.

This is Large ribosomal subunit protein bL31B from Chloroherpeton thalassium (strain ATCC 35110 / GB-78).